Here is a 493-residue protein sequence, read N- to C-terminus: Probable glycine dehydrogenase (decarboxylating) subunit 2 (493 aa).

Lys-269 carries the N6-(pyridoxal phosphate)lysine modification.

It belongs to the GcvP family. C-terminal subunit subfamily. As to quaternary structure, the glycine cleavage system is composed of four proteins: P, T, L and H. In this organism, the P 'protein' is a heterodimer of two subunits. The cofactor is pyridoxal 5'-phosphate.

The catalysed reaction is N(6)-[(R)-lipoyl]-L-lysyl-[glycine-cleavage complex H protein] + glycine + H(+) = N(6)-[(R)-S(8)-aminomethyldihydrolipoyl]-L-lysyl-[glycine-cleavage complex H protein] + CO2. In terms of biological role, the glycine cleavage system catalyzes the degradation of glycine. The P protein binds the alpha-amino group of glycine through its pyridoxal phosphate cofactor; CO(2) is released and the remaining methylamine moiety is then transferred to the lipoamide cofactor of the H protein. The chain is Probable glycine dehydrogenase (decarboxylating) subunit 2 from Chloroherpeton thalassium (strain ATCC 35110 / GB-78).